Here is a 157-residue protein sequence, read N- to C-terminus: SsrA-binding protein (157 aa).

Residues 132-157 (KLHDKRETEKKRDWSREKGRLLRSRG) form a disordered region. Residues 135–151 (DKRETEKKRDWSREKGR) show a composition bias toward basic and acidic residues.

This sequence belongs to the SmpB family.

The protein resides in the cytoplasm. Required for rescue of stalled ribosomes mediated by trans-translation. Binds to transfer-messenger RNA (tmRNA), required for stable association of tmRNA with ribosomes. tmRNA and SmpB together mimic tRNA shape, replacing the anticodon stem-loop with SmpB. tmRNA is encoded by the ssrA gene; the 2 termini fold to resemble tRNA(Ala) and it encodes a 'tag peptide', a short internal open reading frame. During trans-translation Ala-aminoacylated tmRNA acts like a tRNA, entering the A-site of stalled ribosomes, displacing the stalled mRNA. The ribosome then switches to translate the ORF on the tmRNA; the nascent peptide is terminated with the 'tag peptide' encoded by the tmRNA and targeted for degradation. The ribosome is freed to recommence translation, which seems to be the essential function of trans-translation. The protein is SsrA-binding protein of Rhodopseudomonas palustris (strain ATCC BAA-98 / CGA009).